Reading from the N-terminus, the 474-residue chain is tRNA-2-methylthio-N(6)-dimethylallyladenosine synthase (474 aa).

An MTTase N-terminal domain is found at 3–120 (KKLHIKTWGC…LPEMIEQVRR (118 aa)). Cys12, Cys49, Cys83, Cys157, Cys161, and Cys164 together coordinate [4Fe-4S] cluster. The Radical SAM core domain occupies 143–375 (RAEGPTAFVS…QDRITQQAMR (233 aa)). Residues 378–441 (RHMMGTVQRI…TNSLRGVFIR (64 aa)) form the TRAM domain.

This sequence belongs to the methylthiotransferase family. MiaB subfamily. Monomer. Requires [4Fe-4S] cluster as cofactor.

The protein resides in the cytoplasm. It carries out the reaction N(6)-dimethylallyladenosine(37) in tRNA + (sulfur carrier)-SH + AH2 + 2 S-adenosyl-L-methionine = 2-methylsulfanyl-N(6)-dimethylallyladenosine(37) in tRNA + (sulfur carrier)-H + 5'-deoxyadenosine + L-methionine + A + S-adenosyl-L-homocysteine + 2 H(+). Catalyzes the methylthiolation of N6-(dimethylallyl)adenosine (i(6)A), leading to the formation of 2-methylthio-N6-(dimethylallyl)adenosine (ms(2)i(6)A) at position 37 in tRNAs that read codons beginning with uridine. This Shewanella baltica (strain OS185) protein is tRNA-2-methylthio-N(6)-dimethylallyladenosine synthase.